Here is a 144-residue protein sequence, read N- to C-terminus: uncharacterized protein (144 aa).

2 consecutive transmembrane segments (helical) span residues 10–30 (ILTR…GLGP) and 60–80 (YVFL…AIAV).

It localises to the membrane. This is an uncharacterized protein from Saccharomyces cerevisiae (strain ATCC 204508 / S288c) (Baker's yeast).